Reading from the N-terminus, the 249-residue chain is Hydroxyacylglutathione hydrolase (249 aa).

Zn(2+) is bound by residues His-53, His-55, Asp-57, His-58, His-110, Asp-127, and His-165.

It belongs to the metallo-beta-lactamase superfamily. Glyoxalase II family. In terms of assembly, monomer. Zn(2+) serves as cofactor.

It catalyses the reaction an S-(2-hydroxyacyl)glutathione + H2O = a 2-hydroxy carboxylate + glutathione + H(+). Its pathway is secondary metabolite metabolism; methylglyoxal degradation; (R)-lactate from methylglyoxal: step 2/2. In terms of biological role, thiolesterase that catalyzes the hydrolysis of S-D-lactoyl-glutathione to form glutathione and D-lactic acid. The chain is Hydroxyacylglutathione hydrolase from Hamiltonella defensa subsp. Acyrthosiphon pisum (strain 5AT).